A 228-amino-acid polypeptide reads, in one-letter code: Ribulose-phosphate 3-epimerase, cytoplasmic isoform (228 aa).

S12 is a substrate binding site. H37, D39, and H70 together coordinate a divalent metal cation. Catalysis depends on D39, which acts as the Proton acceptor. Substrate-binding positions include H70, G150 to G153, D179 to G181, and G201 to S202. A divalent metal cation is bound at residue D179. The active-site Proton donor is the D179.

Belongs to the ribulose-phosphate 3-epimerase family. As to quaternary structure, homodimer. It depends on Co(2+) as a cofactor. Fe(2+) serves as cofactor. Requires Mn(2+) as cofactor. Zn(2+) is required as a cofactor. As to expression, predominantly accumulates in roots and seedlings.

The protein localises to the cytoplasm. The catalysed reaction is D-ribulose 5-phosphate = D-xylulose 5-phosphate. The protein operates within carbohydrate degradation; pentose phosphate pathway; D-xylulose 5-phosphate from D-ribulose 5-phosphate (non-oxidative stage): step 1/1. Its function is as follows. Catalyzes the reversible epimerization of D-ribulose 5-phosphate to D-xylulose 5-phosphate. The polypeptide is Ribulose-phosphate 3-epimerase, cytoplasmic isoform (Oryza sativa subsp. japonica (Rice)).